The primary structure comprises 122 residues: Large ribosomal subunit protein bL20 (122 aa).

This sequence belongs to the bacterial ribosomal protein bL20 family.

Binds directly to 23S ribosomal RNA and is necessary for the in vitro assembly process of the 50S ribosomal subunit. It is not involved in the protein synthesizing functions of that subunit. This Treponema pallidum (strain Nichols) protein is Large ribosomal subunit protein bL20 (rplT).